Here is a 186-residue protein sequence, read N- to C-terminus: Peptidyl-tRNA hydrolase (186 aa).

Tyrosine 14 contacts tRNA. Catalysis depends on histidine 19, which acts as the Proton acceptor. Tyrosine 61, asparagine 63, and asparagine 107 together coordinate tRNA.

This sequence belongs to the PTH family. In terms of assembly, monomer.

The protein localises to the cytoplasm. It carries out the reaction an N-acyl-L-alpha-aminoacyl-tRNA + H2O = an N-acyl-L-amino acid + a tRNA + H(+). Its function is as follows. Hydrolyzes ribosome-free peptidyl-tRNAs (with 1 or more amino acids incorporated), which drop off the ribosome during protein synthesis, or as a result of ribosome stalling. In terms of biological role, catalyzes the release of premature peptidyl moieties from peptidyl-tRNA molecules trapped in stalled 50S ribosomal subunits, and thus maintains levels of free tRNAs and 50S ribosomes. The polypeptide is Peptidyl-tRNA hydrolase (Helicobacter acinonychis (strain Sheeba)).